We begin with the raw amino-acid sequence, 593 residues long: NADH-quinone oxidoreductase subunit C/D (593 aa).

Residues 1–184 form an NADH dehydrogenase I subunit C region; the sequence is MTADSALYIP…DPYSLSAAKQ (184 aa). Residues 208-593 form an NADH dehydrogenase I subunit D region; the sequence is DYMFLNLGPN…IDFVMADVDR (386 aa).

In the N-terminal section; belongs to the complex I 30 kDa subunit family. The protein in the C-terminal section; belongs to the complex I 49 kDa subunit family. In terms of assembly, NDH-1 is composed of 13 different subunits. Subunits NuoB, CD, E, F, and G constitute the peripheral sector of the complex.

The protein localises to the cell inner membrane. It catalyses the reaction a quinone + NADH + 5 H(+)(in) = a quinol + NAD(+) + 4 H(+)(out). Its function is as follows. NDH-1 shuttles electrons from NADH, via FMN and iron-sulfur (Fe-S) centers, to quinones in the respiratory chain. The immediate electron acceptor for the enzyme in this species is believed to be ubiquinone. Couples the redox reaction to proton translocation (for every two electrons transferred, four hydrogen ions are translocated across the cytoplasmic membrane), and thus conserves the redox energy in a proton gradient. This chain is NADH-quinone oxidoreductase subunit C/D, found in Pseudomonas paraeruginosa (strain DSM 24068 / PA7) (Pseudomonas aeruginosa (strain PA7)).